Consider the following 1309-residue polypeptide: MSGQLVQWKSSPDRVTQSAIKEALHSPLADGDMNEMNVPVDPLENKVNSTNIIEGSPKANPNPVKFMNTSEIFQKSLGLLDESPRHDDELNIEVGDNDRPNANILHNERTPDLDRIANFFKSNRTPGKENLLTKYQSSDLEDTPLMLRKKMTFQTPTDPLEQKTFKKLKSDTGFCYYGEQNDGEENASLEVTEADATFVQMAERSADNYDCALEGIVTPKRYKDELSKSGGMQDERVQKTQIMISAESPNSISSYDKNKITGNGRTTRNVNKVFNNNEDNIGAIEEKNPVKKKSENYSSDDLRERNNQIIQSNESEEINELEKNLNVSGRENDVNNLDIDINSAVSGTPSRNNAEEEMYSSESVNNREPSKKWIFRYSKDKTENNSNRSTQIVNNPRTQEMPLDSISIDTQPLSKSFNTETNNELETQIIVSSLSQGISAQKGPVFHSTGQTEEIKTQIINSPEQNALNATFETPVTLSRINFEPILEVPETSSPSKNTMSKPSNSSPIPKEKDTFNIHEREVETNNVFSNDIQNSSNAATRDDIIIAGSSDFNEQKEITDRIYLQLSGKQISDSGSDETERMSPNELDTKKESTIMSEVELTQELPEVEEQQDLQTSPKKLVVEEETLMEIKKSKGNSLQLHDDNKECNSDKQDGTESLDVALIEHESKGQSSELQKNLMQLFPSESQEIIQNRRTIKRRQKDTIEIGEEEENRSTKTSPTKHLKRNSDLDAASIKREPSCSITIQTGETGSGKDSKEQSYVFPEGIRTADNSFLSKDDIIFGNAVWCQYTWNYKFYPGILLEVDTNQDGCWIYFETGRSLTKDEDIYYLDIRIGDAVTFDGNEYVVVGLECRSHDLNIIRCIRGYDTVHLKKKNASGLLGKRTLIKALSSISLDLSEWAKRAKIILEDNEKNKGDAYRYLRHPIRGRKSMTNVLSPKKHTDDEKDINTHTEVYNNEIESSSEKKEIVKKDSRDALAEHAGAPSLLFSSGEIRTGNVFDKCIFVLTSLFENREELRQTIESQGGTVIESGFSTLFNFTHPLAKSLVNKGNTDNIRELALKLAWKPHSLFADCRFACLITKRHLRSLKYLETLALGWPTLHWKFISACIEKKRIVPHLIYQYLLPSGESFRLSLDSPSKGGIIKSNNIFSFYTQFLRGSNLRDQICGVKKMLNDYIVIVWGRSELDSFVKFAFACLSAGRMLTIDLPNIDVDDTEPLLNALDSLVPRIGSELSNRKLKFLIYANENNGKSQMKLLERLRSQISLKFKKFNYIFHTESKEWLIQTIINEDTGFHDDITDNDIYNTISEVR.

Residues 1 to 19 (MSGQLVQWKSSPDRVTQSA) are compositionally biased toward polar residues. The disordered stretch occupies residues 1 to 39 (MSGQLVQWKSSPDRVTQSAIKEALHSPLADGDMNEMNVP). Residues serine 26, serine 56, and serine 205 each carry the phosphoserine modification. Residue threonine 218 is modified to Phosphothreonine. Serine 248 carries the phosphoserine modification. The segment at 280-299 (NIGAIEEKNPVKKKSENYSS) is disordered. The span at 284–299 (IEEKNPVKKKSENYSS) shows a compositional bias: basic and acidic residues. A phosphoserine mark is found at serine 312 and serine 315. A disordered region spans residues 342–365 (NSAVSGTPSRNNAEEEMYSSESVN). Polar residues predominate over residues 343–352 (SAVSGTPSRN). Serine 462 is modified (phosphoserine). A phosphothreonine mark is found at threonine 471 and threonine 474. The segment at 490-512 (PETSSPSKNTMSKPSNSSPIPKE) is disordered. The span at 491 to 508 (ETSSPSKNTMSKPSNSSP) shows a compositional bias: polar residues. Position 568 is a phosphoserine (serine 568). Disordered stretches follow at residues 636 to 655 (KGNSLQLHDDNKECNSDKQD) and 691 to 731 (IIQN…NSDL). Residues 642–655 (LHDDNKECNSDKQD) are compositionally biased toward basic and acidic residues. Position 729 is a phosphoserine (serine 729). The 129-residue stretch at 994 to 1122 (RTGNVFDKCI…RIVPHLIYQY (129 aa)) folds into the BRCT domain.

In terms of assembly, physically associates with RAD53.

The protein localises to the nucleus. Functionally, essential for cell cycle arrest at the G2 stage following DNA damage by X-irradiation or inactivation of DNA ligase. The polypeptide is DNA repair protein RAD9 (RAD9) (Saccharomyces cerevisiae (strain ATCC 204508 / S288c) (Baker's yeast)).